A 213-amino-acid polypeptide reads, in one-letter code: Large ribosomal subunit protein uL3 (213 aa).

At Gln-151 the chain carries N5-methylglutamine.

This sequence belongs to the universal ribosomal protein uL3 family. As to quaternary structure, part of the 50S ribosomal subunit. Forms a cluster with proteins L14 and L19. Post-translationally, methylated by PrmB.

Its function is as follows. One of the primary rRNA binding proteins, it binds directly near the 3'-end of the 23S rRNA, where it nucleates assembly of the 50S subunit. The protein is Large ribosomal subunit protein uL3 of Rhizobium johnstonii (strain DSM 114642 / LMG 32736 / 3841) (Rhizobium leguminosarum bv. viciae).